Reading from the N-terminus, the 600-residue chain is Arginine--tRNA ligase (600 aa).

L-arginine contacts are provided by residues 151 to 153, H162, Y332, D336, and Q360; that span reads SPN. Residues 152–162 carry the 'HIGH' region motif; that stretch reads PNIAKEMHIGH.

The protein belongs to the class-I aminoacyl-tRNA synthetase family.

The catalysed reaction is tRNA(Arg) + L-arginine + ATP = L-arginyl-tRNA(Arg) + AMP + diphosphate. The chain is Arginine--tRNA ligase (RARS) from Acanthamoeba polyphaga mimivirus (APMV).